We begin with the raw amino-acid sequence, 354 residues long: Ferrochelatase (354 aa).

Residues His-204 and Glu-306 each coordinate Fe cation.

The protein belongs to the ferrochelatase family.

Its subcellular location is the cytoplasm. It carries out the reaction heme b + 2 H(+) = protoporphyrin IX + Fe(2+). Its pathway is porphyrin-containing compound metabolism; protoheme biosynthesis; protoheme from protoporphyrin-IX: step 1/1. Catalyzes the ferrous insertion into protoporphyrin IX. The chain is Ferrochelatase from Coxiella burnetii (strain RSA 493 / Nine Mile phase I).